A 533-amino-acid polypeptide reads, in one-letter code: Glucomannan 4-beta-mannosyltransferase 9 (533 aa).

A helical transmembrane segment spans residues 37–57; the sequence is IVPALRLGVYICLTMSVMLFV. Asp-136 is a catalytic residue. 2 residues coordinate substrate: Asp-195 and Asp-197. The active site involves Asp-289. The next 4 membrane-spanning stretches (helical) occupy residues 368–388, 404–426, 483–503, and 510–530; these read LVAH…TVLV, VITL…WILF, VLEL…AFFG, and YLFA…GTIV.

It belongs to the glycosyltransferase 2 family. Plant cellulose synthase-like A subfamily. Expressed in cotyledons at the base of the hypocotyls, in root elongation zone, lateral root primordia, vascular system of young leaves, abscission zone of the pedicle,.

The protein localises to the golgi apparatus membrane. It carries out the reaction GDP-mannose + (glucomannan)n = GDP + (glucomannan)n+1.. Functionally, possesses glucomannan synthase and mannan synthase activities in vitro. Mannan synthase consists of a 4-beta-mannosyltransferase activity on mannan using GDP-mannose. The beta-1,4-mannan product is the backbone for galactomannan synthesis by galactomannan galactosyltransferase. Galactomannan is a noncellulosic polysaccharides of plant cell wall. Required for lateral root development. In Arabidopsis thaliana (Mouse-ear cress), this protein is Glucomannan 4-beta-mannosyltransferase 9.